We begin with the raw amino-acid sequence, 263 residues long: Dihydropteroate synthase type-3 (263 aa).

Residues 2-257 enclose the Pterin-binding domain; the sequence is SKIFGIVNIT…DVKSLSDALK (256 aa). Asparagine 9 serves as a coordination point for Mg(2+). A 4-aminobenzoate-binding site is contributed by serine 49. Positions 82, 101, and 172 each coordinate (7,8-dihydropterin-6-yl)methyl diphosphate. Asparagine 101 and aspartate 172 together coordinate 6-hydroxymethyl-7,8-dihydropterin. A 4-aminobenzoate-binding site is contributed by phenylalanine 177. (7,8-dihydropterin-6-yl)methyl diphosphate is bound at residue lysine 211. Lysine 211 is a binding site for 6-hydroxymethyl-7,8-dihydropterin. Serine 212 provides a ligand contact to 4-aminobenzoate. Residue 245-247 participates in (7,8-dihydropterin-6-yl)methyl diphosphate binding; sequence RTH.

It belongs to the DHPS family. Mg(2+) is required as a cofactor.

It carries out the reaction (7,8-dihydropterin-6-yl)methyl diphosphate + 4-aminobenzoate = 7,8-dihydropteroate + diphosphate. Its pathway is cofactor biosynthesis; tetrahydrofolate biosynthesis; 7,8-dihydrofolate from 2-amino-4-hydroxy-6-hydroxymethyl-7,8-dihydropteridine diphosphate and 4-aminobenzoate: step 1/2. In terms of biological role, catalyzes the condensation of para-aminobenzoate (pABA) with 6-hydroxymethyl-7,8-dihydropterin diphosphate (DHPt-PP) to form 7,8-dihydropteroate (H2Pte), the immediate precursor of folate derivatives. Confers resistance to sulfonamide antibiotics, including sulfamethoxazole (SMX), sulfadiazine and sulfisoxazole. This is Dihydropteroate synthase type-3 from Escherichia coli.